A 459-amino-acid chain; its full sequence is Pentatricopeptide repeat-containing protein At1g07740, mitochondrial (459 aa).

The N-terminal 20 residues, 1-20 (MRRRLSSVLINNQCIASQRH), are a transit peptide targeting the mitochondrion. Residues 19-41 (RHYHTSRPEKPTKKASSHEPTHK) are disordered. Basic and acidic residues predominate over residues 24–41 (SRPEKPTKKASSHEPTHK). PPR repeat units follow at residues 80–114 (DYPSYSSLIYKLAKSRNFDAVDQILRLVRYRNVRC), 115–149 (RESLFMGLIQHYGKAGSVDKAIDVFHKITSFDCVR), 150–184 (TIQSLNTLINVLVDNGELEKAKSFFDGAKDMRLRP), 185–219 (NSVSFNILIKGFLDKCDWEAACKVFDEMLEMEVQP), 220–254 (SVVTYNSLIGFLCRNDDMGKAKSLLEDMIKKRIRP), 255–289 (NAVTFGLLMKGLCCKGEYNEAKKLMFDMEYRGCKP), 290–324 (GLVNYGILMSDLGKRGRIDEAKLLLGEMKKRRIKP), 325–359 (DVVIYNILVNHLCTECRVPEAYRVLTEMQMKGCKP), 360–394 (NAATYRMMIDGFCRIEDFDSGLNVLNAMLASRHCP), and 395–429 (TPATFVCMVAGLIKGGNLDHACFVLEVMGKKNLSF).

This sequence belongs to the PPR family. P subfamily.

It localises to the mitochondrion. This chain is Pentatricopeptide repeat-containing protein At1g07740, mitochondrial, found in Arabidopsis thaliana (Mouse-ear cress).